Here is a 1138-residue protein sequence, read N- to C-terminus: Nonsense-mediated mRNA decay factor SMG7 (1138 aa).

Ser2 is modified (N-acetylserine). TPR repeat units lie at residues 152–185 (QHCLVHLGDIARYRNQTSQAESYYRHAAQLVPSN) and 187–219 (QPYNQLAILASSKGDHLTTIFYYCRSIAVKFPF). 5 disordered regions span residues 515–612 (ATDG…LPSR), 649–745 (STAH…YQQA), 838–871 (QPNMDRRSKRSPGVFRPEQDPVPRMPFEDPKSSP), 990–1090 (SLPA…PSME), and 1106–1138 (SSMMHPGPSALEQLLMQQKQKQQRGQGAMNPPH). A Phosphoserine modification is found at Ser519. Positions 525 to 537 (VLSTGRNPSNSCD) are enriched in polar residues. The segment covering 548–582 (ENIKPREVNQGRSFPPKEVKSQTELRKTPVSEARK) has biased composition (basic and acidic residues). The residue at position 575 (Thr575) is a Phosphothreonine. Composition is skewed to polar residues over residues 584–597 (PVTQTPSQTSNSQF) and 649–673 (STAHSPAGNQVQAGKQSHIPYSQQR). Over residues 674–721 (PSGPGPMNQGPQQSQPPSQPPLTSLPAQPTAQSTSQLQVQALAQQQQS) the composition is skewed to low complexity. Phosphoserine occurs at positions 732 and 848. The span at 854–868 (PEQDPVPRMPFEDPK) shows a compositional bias: basic and acidic residues. The span at 990–999 (SLPASSDHST) shows a compositional bias: polar residues. Residues 1000-1026 (PASQSPHSSNPSSLPSSPPTHNHNSAP) show a composition bias toward low complexity. Residues 1037 to 1051 (DNRDRRPADRWKTDK) show a composition bias toward basic and acidic residues. Residues 1063 to 1082 (SATSSSESSWHQASTPSGTW) are compositionally biased toward polar residues. Positions 1118–1132 (QLLMQQKQKQQRGQG) are enriched in low complexity.

Part of a complex that contains SMG5, SMG7, PPP2CA, a short isoform of UPF3A (isoform UPF3AS, but not isoform UPF3AL) and phosphorylated UPF1. Interacts with DHX34; the interaction is RNA-independent.

It localises to the cytoplasm. The protein localises to the nucleus. Functionally, plays a role in nonsense-mediated mRNA decay. Recruits UPF1 to cytoplasmic mRNA decay bodies. Together with SMG5 is thought to provide a link to the mRNA degradation machinery involving exonucleolytic pathways, and to serve as an adapter for UPF1 to protein phosphatase 2A (PP2A), thereby triggering UPF1 dephosphorylation. The polypeptide is Nonsense-mediated mRNA decay factor SMG7 (Mus musculus (Mouse)).